Consider the following 239-residue polypeptide: Phosphoglycolate phosphatase (239 aa).

Residue aspartate 9 is the Nucleophile of the active site. Residues aspartate 9 and aspartate 11 each contribute to the Mg(2+) site. Lysine 157 is a binding site for substrate. The Mg(2+) site is built by aspartate 180 and aspartate 184.

Belongs to the archaeal SPP-like hydrolase family. It depends on Mg(2+) as a cofactor.

It catalyses the reaction 2-phosphoglycolate + H2O = glycolate + phosphate. Functionally, catalyzes the dephosphorylation of 2-phosphoglycolate. This chain is Phosphoglycolate phosphatase, found in Thermococcus kodakarensis (strain ATCC BAA-918 / JCM 12380 / KOD1) (Pyrococcus kodakaraensis (strain KOD1)).